The sequence spans 633 residues: 1-deoxy-D-xylulose-5-phosphate synthase (633 aa).

A disordered region spans residues 1-22; it reads MPTTFHEIPRKRPTTPLLDRAQ. Residues H87 and 128–130 each bind thiamine diphosphate; that span reads GHS. A Mg(2+)-binding site is contributed by D159. Residues 160-161, N188, F295, and E378 contribute to the thiamine diphosphate site; that span reads GA. N188 contributes to the Mg(2+) binding site.

This sequence belongs to the transketolase family. DXPS subfamily. As to quaternary structure, homodimer. Mg(2+) serves as cofactor. The cofactor is thiamine diphosphate.

The enzyme catalyses D-glyceraldehyde 3-phosphate + pyruvate + H(+) = 1-deoxy-D-xylulose 5-phosphate + CO2. Its pathway is metabolic intermediate biosynthesis; 1-deoxy-D-xylulose 5-phosphate biosynthesis; 1-deoxy-D-xylulose 5-phosphate from D-glyceraldehyde 3-phosphate and pyruvate: step 1/1. Functionally, catalyzes the acyloin condensation reaction between C atoms 2 and 3 of pyruvate and glyceraldehyde 3-phosphate to yield 1-deoxy-D-xylulose-5-phosphate (DXP). This is 1-deoxy-D-xylulose-5-phosphate synthase from Pseudomonas fluorescens (strain ATCC BAA-477 / NRRL B-23932 / Pf-5).